Here is a 335-residue protein sequence, read N- to C-terminus: Nod factor export ATP-binding protein I (335 aa).

Residues 37–267 (IDVASVTKSY…KIGCQVIEIY (231 aa)) enclose the ABC transporter domain. Position 69–76 (69–76 (GPNGAGKS)) interacts with ATP.

It belongs to the ABC transporter superfamily. Lipooligosaccharide exporter (TC 3.A.1.102) family. As to quaternary structure, the complex is composed of two ATP-binding proteins (NodI) and two transmembrane proteins (NodJ).

Its subcellular location is the cell inner membrane. Part of the ABC transporter complex NodIJ involved in the export of the nodulation factors (Nod factors), the bacterial signal molecules that induce symbiosis and subsequent nodulation induction. Nod factors are LCO (lipo-chitin oligosaccharide), a modified beta-1,4-linked N-acetylglucosamine oligosaccharide. This subunit is responsible for energy coupling to the transport system. This Rhizobium meliloti (strain 1021) (Ensifer meliloti) protein is Nod factor export ATP-binding protein I.